Consider the following 406-residue polypeptide: Glutamyl-tRNA reductase (406 aa).

Residues T50–R53, S107, E112–Q114, and Q118 contribute to the substrate site. The active-site Nucleophile is C51. Residue G187–G192 participates in NADP(+) binding.

The protein belongs to the glutamyl-tRNA reductase family. As to quaternary structure, homodimer.

The enzyme catalyses (S)-4-amino-5-oxopentanoate + tRNA(Glu) + NADP(+) = L-glutamyl-tRNA(Glu) + NADPH + H(+). It participates in porphyrin-containing compound metabolism; protoporphyrin-IX biosynthesis; 5-aminolevulinate from L-glutamyl-tRNA(Glu): step 1/2. In terms of biological role, catalyzes the NADPH-dependent reduction of glutamyl-tRNA(Glu) to glutamate 1-semialdehyde (GSA). The polypeptide is Glutamyl-tRNA reductase (Aquifex aeolicus (strain VF5)).